Reading from the N-terminus, the 107-residue chain is Flagellar hook-basal body complex protein FliE (107 aa).

It belongs to the FliE family.

The protein localises to the bacterial flagellum basal body. This chain is Flagellar hook-basal body complex protein FliE, found in Cupriavidus pinatubonensis (strain JMP 134 / LMG 1197) (Cupriavidus necator (strain JMP 134)).